The primary structure comprises 365 residues: Peptide chain release factor 2 (365 aa).

Position 252 is an N5-methylglutamine (Gln252).

Belongs to the prokaryotic/mitochondrial release factor family. Post-translationally, methylated by PrmC. Methylation increases the termination efficiency of RF2.

The protein localises to the cytoplasm. In terms of biological role, peptide chain release factor 2 directs the termination of translation in response to the peptide chain termination codons UGA and UAA. The protein is Peptide chain release factor 2 of Shewanella baltica (strain OS223).